The sequence spans 188 residues: Large ribosomal subunit protein eL18 (188 aa).

Lys-119 is covalently cross-linked (Glycyl lysine isopeptide (Lys-Gly) (interchain with G-Cter in SUMO2)). A Phosphoserine modification is found at Ser-130. Residues 151–188 (HFGKAPGTPHSHTKPYVRSKGRKFERARGRRASRGYKN) form a disordered region. At Thr-158 the chain carries Phosphothreonine. Composition is skewed to basic residues over residues 161–171 (SHTKPYVRSKG) and 178–188 (RGRRASRGYKN). Lys-164 participates in a covalent cross-link: Glycyl lysine isopeptide (Lys-Gly) (interchain with G-Cter in SUMO2).

This sequence belongs to the eukaryotic ribosomal protein eL18 family. Component of the large ribosomal subunit.

It localises to the cytoplasm. It is found in the cytosol. The protein resides in the rough endoplasmic reticulum. Its function is as follows. Component of the large ribosomal subunit. The ribosome is a large ribonucleoprotein complex responsible for the synthesis of proteins in the cell. This Homo sapiens (Human) protein is Large ribosomal subunit protein eL18 (RPL18).